Consider the following 112-residue polypeptide: Nucleoid-associated protein CPR_0056 (112 aa).

Residues 91–100 (ASEETSEKMG) show a composition bias toward basic and acidic residues. The segment at 91 to 112 (ASEETSEKMGKLTGGMGMPGLF) is disordered. Residues 102 to 112 (LTGGMGMPGLF) show a composition bias toward gly residues.

It belongs to the YbaB/EbfC family. As to quaternary structure, homodimer.

The protein localises to the cytoplasm. Its subcellular location is the nucleoid. Binds to DNA and alters its conformation. May be involved in regulation of gene expression, nucleoid organization and DNA protection. This Clostridium perfringens (strain SM101 / Type A) protein is Nucleoid-associated protein CPR_0056.